The primary structure comprises 144 residues: D-aminoacyl-tRNA deacylase (144 aa).

The Gly-cisPro motif, important for rejection of L-amino acids signature appears at 136-137; it reads GP.

This sequence belongs to the DTD family. In terms of assembly, homodimer.

It localises to the cytoplasm. The catalysed reaction is glycyl-tRNA(Ala) + H2O = tRNA(Ala) + glycine + H(+). It carries out the reaction a D-aminoacyl-tRNA + H2O = a tRNA + a D-alpha-amino acid + H(+). In terms of biological role, an aminoacyl-tRNA editing enzyme that deacylates mischarged D-aminoacyl-tRNAs. Also deacylates mischarged glycyl-tRNA(Ala), protecting cells against glycine mischarging by AlaRS. Acts via tRNA-based rather than protein-based catalysis; rejects L-amino acids rather than detecting D-amino acids in the active site. By recycling D-aminoacyl-tRNA to D-amino acids and free tRNA molecules, this enzyme counteracts the toxicity associated with the formation of D-aminoacyl-tRNA entities in vivo and helps enforce protein L-homochirality. This is D-aminoacyl-tRNA deacylase from Glaesserella parasuis serovar 5 (strain SH0165) (Haemophilus parasuis).